We begin with the raw amino-acid sequence, 128 residues long: Cytochrome b (128 aa).

The next 3 membrane-spanning stretches (helical) occupy residues 25–45, 69–90, and 105–125; these read FGSM…FLAI, WIMQ…YIHI, and WLSG…XMCY. Positions 75 and 89 each coordinate heme b. H126 serves as a coordination point for a ubiquinone.

It belongs to the cytochrome b family. The cytochrome bc1 complex contains 3 respiratory subunits (MT-CYB, CYC1 and UQCRFS1), 2 core proteins (UQCRC1 and UQCRC2) and probably 6 low-molecular weight proteins. The cofactor is heme b.

It localises to the mitochondrion inner membrane. Its function is as follows. Component of the ubiquinol-cytochrome c reductase complex (complex III or cytochrome b-c1 complex) that is part of the mitochondrial respiratory chain. The b-c1 complex mediates electron transfer from ubiquinol to cytochrome c. Contributes to the generation of a proton gradient across the mitochondrial membrane that is then used for ATP synthesis. In Crotalus viridis viridis (Prairie rattlesnake), this protein is Cytochrome b (MT-CYB).